Consider the following 496-residue polypeptide: Beta-N-acetylhexosaminidase (496 aa).

Catalysis depends on glutamate 298, which acts as the Proton donor.

The protein belongs to the glycosyl hydrolase 20 family.

It carries out the reaction Hydrolysis of terminal non-reducing N-acetyl-D-hexosamine residues in N-acetyl-beta-D-hexosaminides.. The protein operates within glycan degradation; chitin degradation. Functionally, catalyzes the cleavage of beta-N-acetylglucosaminides and beta-N-acetylgalactosaminides. Also catalyzes the hydrolysis of N-acetylchitooligomers. May be involved in chitin degradation. It is not able to cleave beta-glucosides. The chain is Beta-N-acetylhexosaminidase (hex20) from Cellulomonas fimi.